Reading from the N-terminus, the 309-residue chain is Ribonuclease Z (309 aa).

Zn(2+)-binding residues include H63, H65, D67, H68, H141, D212, and H270. D67 functions as the Proton acceptor in the catalytic mechanism.

Belongs to the RNase Z family. In terms of assembly, homodimer. Requires Zn(2+) as cofactor.

The enzyme catalyses Endonucleolytic cleavage of RNA, removing extra 3' nucleotides from tRNA precursor, generating 3' termini of tRNAs. A 3'-hydroxy group is left at the tRNA terminus and a 5'-phosphoryl group is left at the trailer molecule.. Zinc phosphodiesterase, which displays some tRNA 3'-processing endonuclease activity. Probably involved in tRNA maturation, by removing a 3'-trailer from precursor tRNA. This Lactobacillus gasseri (strain ATCC 33323 / DSM 20243 / BCRC 14619 / CIP 102991 / JCM 1131 / KCTC 3163 / NCIMB 11718 / NCTC 13722 / AM63) protein is Ribonuclease Z.